The sequence spans 378 residues: Beta sliding clamp (378 aa).

Belongs to the beta sliding clamp family. As to quaternary structure, forms a ring-shaped head-to-tail homodimer around DNA which binds and tethers DNA polymerases and other proteins to the DNA. The DNA replisome complex has a single clamp-loading complex (3 tau and 1 each of delta, delta', psi and chi subunits) which binds 3 Pol III cores (1 core on the leading strand and 2 on the lagging strand) each with a beta sliding clamp dimer. Additional proteins in the replisome are other copies of gamma, psi and chi, Ssb, DNA helicase and RNA primase.

The protein resides in the cytoplasm. Confers DNA tethering and processivity to DNA polymerases and other proteins. Acts as a clamp, forming a ring around DNA (a reaction catalyzed by the clamp-loading complex) which diffuses in an ATP-independent manner freely and bidirectionally along dsDNA. Initially characterized for its ability to contact the catalytic subunit of DNA polymerase III (Pol III), a complex, multichain enzyme responsible for most of the replicative synthesis in bacteria; Pol III exhibits 3'-5' exonuclease proofreading activity. The beta chain is required for initiation of replication as well as for processivity of DNA replication. This is Beta sliding clamp (dnaN) from Streptococcus pneumoniae (strain ATCC BAA-255 / R6).